The sequence spans 105 residues: Thioredoxin (105 aa).

Residues 2–105 (VKQIESKTAF…KLEATINELV (104 aa)) form the Thioredoxin domain. Position 3 is an N6-acetyllysine (lysine 3). At lysine 8 the chain carries N6-succinyllysine. Catalysis depends on nucleophile residues cysteine 32 and cysteine 35. Cysteine 32 and cysteine 35 form a disulfide bridge. The residue at position 39 (lysine 39) is an N6-acetyllysine. S-nitrosocysteine occurs at positions 62 and 69. Position 73 is an S-nitrosocysteine; alternate (cysteine 73). Lysine 94 is subject to N6-acetyllysine; alternate. Position 94 is an N6-succinyllysine; alternate (lysine 94).

It belongs to the thioredoxin family. In terms of assembly, homodimer; disulfide-linked. Interacts with TXNIP through the redox-active site. Interacts with MAP3K5 and CASP3. In case of infection, interacts with S.typhimurium protein slrP. Interacts with APEX1; the interaction stimulates the FOS/JUN AP-1 DNA-binding activity in a redox-dependent manner. In terms of processing, in the fully reduced protein, both Cys-69 and Cys-73 are nitrosylated in response to nitric oxide (NO). When two disulfide bonds are present in the protein, only Cys-73 is nitrosylated. Cys-73 can serve as donor for nitrosylation of target proteins. In case of infection, ubiquitinated by S.typhimurium protein slrP, leading to its degradation.

The protein localises to the nucleus. It is found in the cytoplasm. Its subcellular location is the secreted. Participates in various redox reactions through the reversible oxidation of its active center dithiol to a disulfide and catalyzes dithiol-disulfide exchange reactions. Plays a role in the reversible S-nitrosylation of cysteine residues in target proteins, and thereby contributes to the response to intracellular nitric oxide. Nitrosylates the active site Cys of CASP3 in response to nitric oxide (NO), and thereby inhibits caspase-3 activity. Induces the FOS/JUN AP-1 DNA-binding activity in ionizing radiation (IR) cells through its oxidation/reduction status and stimulates AP-1 transcriptional activity. Functionally, ADF augments the expression of the interleukin-2 receptor TAC (IL2R/P55). This is Thioredoxin (TXN) from Homo sapiens (Human).